A 427-amino-acid chain; its full sequence is 3-phosphoshikimate 1-carboxyvinyltransferase (427 aa).

3-phosphoshikimate-binding residues include Lys-22, Ser-23, and Arg-27. Lys-22 serves as a coordination point for phosphoenolpyruvate. Residues Gly-96 and Arg-124 each contribute to the phosphoenolpyruvate site. Residues Ser-170, Ser-171, Gln-172, Ser-198, Asp-314, Asn-337, and Lys-341 each contribute to the 3-phosphoshikimate site. Gln-172 lines the phosphoenolpyruvate pocket. The Proton acceptor role is filled by Asp-314. Residues Arg-345, Arg-387, and Lys-412 each contribute to the phosphoenolpyruvate site.

The protein belongs to the EPSP synthase family. In terms of assembly, monomer.

The protein resides in the cytoplasm. The enzyme catalyses 3-phosphoshikimate + phosphoenolpyruvate = 5-O-(1-carboxyvinyl)-3-phosphoshikimate + phosphate. It functions in the pathway metabolic intermediate biosynthesis; chorismate biosynthesis; chorismate from D-erythrose 4-phosphate and phosphoenolpyruvate: step 6/7. Functionally, catalyzes the transfer of the enolpyruvyl moiety of phosphoenolpyruvate (PEP) to the 5-hydroxyl of shikimate-3-phosphate (S3P) to produce enolpyruvyl shikimate-3-phosphate and inorganic phosphate. The sequence is that of 3-phosphoshikimate 1-carboxyvinyltransferase from Sulfurovum sp. (strain NBC37-1).